We begin with the raw amino-acid sequence, 90 residues long: Putative beta-neurotoxin RjAa2f (90 aa).

The signal sequence occupies residues 1–18 (MKILIFIIASFMLIGVEC). In terms of domain architecture, LCN-type CS-alpha/beta spans 19–89 (KEGYPMGSDG…VWDSKTNKCG (71 aa)). Disulfide bonds link Cys-29-Cys-88, Cys-33-Cys-62, Cys-40-Cys-69, and Cys-44-Cys-71.

It belongs to the long (4 C-C) scorpion toxin superfamily. Sodium channel inhibitor family. Beta subfamily. As to expression, expressed by the venom gland.

Its subcellular location is the secreted. Its function is as follows. Beta toxins bind voltage-independently at site-4 of sodium channels (Nav) and shift the voltage of activation toward more negative potentials thereby affecting sodium channel activation and promoting spontaneous and repetitive firing. The chain is Putative beta-neurotoxin RjAa2f from Rhopalurus junceus (Caribbean blue scorpion).